Consider the following 184-residue polypeptide: ATP synthase subunit delta (184 aa).

It belongs to the ATPase delta chain family. F-type ATPases have 2 components, F(1) - the catalytic core - and F(0) - the membrane proton channel. F(1) has five subunits: alpha(3), beta(3), gamma(1), delta(1), epsilon(1). F(0) has three main subunits: a(1), b(2) and c(10-14). The alpha and beta chains form an alternating ring which encloses part of the gamma chain. F(1) is attached to F(0) by a central stalk formed by the gamma and epsilon chains, while a peripheral stalk is formed by the delta and b chains.

Its subcellular location is the cell membrane. In terms of biological role, f(1)F(0) ATP synthase produces ATP from ADP in the presence of a proton or sodium gradient. F-type ATPases consist of two structural domains, F(1) containing the extramembraneous catalytic core and F(0) containing the membrane proton channel, linked together by a central stalk and a peripheral stalk. During catalysis, ATP synthesis in the catalytic domain of F(1) is coupled via a rotary mechanism of the central stalk subunits to proton translocation. This protein is part of the stalk that links CF(0) to CF(1). It either transmits conformational changes from CF(0) to CF(1) or is implicated in proton conduction. The protein is ATP synthase subunit delta of Wolbachia pipientis subsp. Culex pipiens (strain wPip).